The following is an 83-amino-acid chain: Exodeoxyribonuclease 7 small subunit (83 aa).

Belongs to the XseB family. Heterooligomer composed of large and small subunits.

The protein resides in the cytoplasm. It carries out the reaction Exonucleolytic cleavage in either 5'- to 3'- or 3'- to 5'-direction to yield nucleoside 5'-phosphates.. Bidirectionally degrades single-stranded DNA into large acid-insoluble oligonucleotides, which are then degraded further into small acid-soluble oligonucleotides. The polypeptide is Exodeoxyribonuclease 7 small subunit (Rhizobium leguminosarum bv. trifolii (strain WSM2304)).